The following is a 130-amino-acid chain: Arsenate reductase 2.2 (130 aa).

In terms of domain architecture, Rhodanese spans 18-119 (RDPRIAVVDV…WELSGRPVCR (102 aa)). Residue C70 is the Cysteine persulfide intermediate of the active site.

It catalyses the reaction [glutaredoxin]-dithiol + arsenate + glutathione + H(+) = glutathionyl-S-S-[glutaredoxin] + arsenite + H2O. Possesses arsenate reductase activity in vitro. Catalyzes the reduction of arsenate [As(V)] to arsenite [As(III)]. May play a role in arsenic retention in roots. In terms of biological role, possesses phosphatase activity towards p-nitrophenyl phosphate in vitro. This chain is Arsenate reductase 2.2 (ACR2.2), found in Oryza sativa subsp. japonica (Rice).